Reading from the N-terminus, the 88-residue chain is Gas vesicle protein A2 (88 aa).

Belongs to the gas vesicle GvpA family. The gas vesicle shell is 2 nm thick and consists of a single layer of this protein. It forms helical ribs nearly perpendicular to the long axis of the vesicle.

The protein localises to the gas vesicle shell. In terms of biological role, gas vesicles are hollow, gas filled proteinaceous nanostructures found in some microorganisms. During planktonic growth they allow positioning of the organism at a favorable depth for light or nutrient acquisition. GvpA forms the protein shell. It is not clear if the 2 type A proteins in this organism are functionally redundant. Functionally, when a minimal gvp locus (gvpA2-gvpR-gvpN-gvpF-gvpG-gvpL-gvpS-gvpK-gvpJ-gvpT-gvpU, called pNL29) is expressed in E.coli gas vesicles are made. The protein is Gas vesicle protein A2 of Priestia megaterium (Bacillus megaterium).